Consider the following 81-residue polypeptide: Protein K6 (81 aa).

It belongs to the poxviridae K6 protein family.

The polypeptide is Protein K6 (Homo sapiens (Human)).